A 321-amino-acid chain; its full sequence is Anthranilate phosphoribosyltransferase (321 aa).

5-phospho-alpha-D-ribose 1-diphosphate is bound by residues glycine 72, 75–76 (GD), threonine 80, 82–85 (NVST), 99–107 (KHGNVSITS), and serine 111. Anthranilate is bound at residue glycine 72. Serine 84 provides a ligand contact to Mg(2+). Asparagine 102 contacts anthranilate. Arginine 157 is an anthranilate binding site. Positions 216 and 217 each coordinate Mg(2+).

It belongs to the anthranilate phosphoribosyltransferase family. Homodimer. Requires Mg(2+) as cofactor.

The enzyme catalyses N-(5-phospho-beta-D-ribosyl)anthranilate + diphosphate = 5-phospho-alpha-D-ribose 1-diphosphate + anthranilate. It functions in the pathway amino-acid biosynthesis; L-tryptophan biosynthesis; L-tryptophan from chorismate: step 2/5. Functionally, catalyzes the transfer of the phosphoribosyl group of 5-phosphorylribose-1-pyrophosphate (PRPP) to anthranilate to yield N-(5'-phosphoribosyl)-anthranilate (PRA). This chain is Anthranilate phosphoribosyltransferase, found in Methanococcus maripaludis (strain C7 / ATCC BAA-1331).